Consider the following 54-residue polypeptide: MLLLIPSNHISIKETSSLMVVTPSSRTLFVVIVSFQQRALTSSVPVFLAVKRGR.

The helical transmembrane segment at 28–50 (LFVVIVSFQQRALTSSVPVFLAV) threads the bilayer.

Its subcellular location is the cell inner membrane. This chain is Protein GndA, found in Escherichia coli (strain K12).